The chain runs to 272 residues: MDDFGTRTACKATETLPMWSHVFSFGLGGIIVPSEAVHEISSATNDLCARWDVPVLHGNKIRGARGSFGFLKKDENKKARFFQELEEILIDDRITAHACVICRPGYRDRYHDKRPEGVRWEMSRTAFDISVERAAKYARSLKRKLSVVYERTGETEDRLIEGYFQRLRTTGTEFSVENSAQHSPMSSADLADTLMSIWPDGKGNPMLQLADLVVHPLGHRPTGLRNRAYDRFAESGQLLDSRTDDPTISIKYSCYDDPYKEYVAPEGNPRNT.

This is an uncharacterized protein from Sinorhizobium fredii (strain NBRC 101917 / NGR234).